A 706-amino-acid chain; its full sequence is Translation factor GUF1 homolog, mitochondrial (706 aa).

Residues 89–272 (SRIRNFSIIA…SIVKNVPPPQ (184 aa)) enclose the tr-type G domain. Residues 98–105 (AHIDHGKS), 165–169 (DTPGH), and 219–222 (NKID) contribute to the GTP site.

Belongs to the TRAFAC class translation factor GTPase superfamily. Classic translation factor GTPase family. LepA subfamily.

The protein localises to the mitochondrion inner membrane. The enzyme catalyses GTP + H2O = GDP + phosphate + H(+). In terms of biological role, promotes mitochondrial protein synthesis. May act as a fidelity factor of the translation reaction, by catalyzing a one-codon backward translocation of tRNAs on improperly translocated ribosomes. Binds to mitochondrial ribosomes in a GTP-dependent manner. This Thalassiosira pseudonana (Marine diatom) protein is Translation factor GUF1 homolog, mitochondrial.